A 257-amino-acid polypeptide reads, in one-letter code: Imidazole glycerol phosphate synthase subunit HisF (257 aa).

Catalysis depends on residues Asp-12 and Asp-131.

It belongs to the HisA/HisF family. Heterodimer of HisH and HisF.

The protein resides in the cytoplasm. It catalyses the reaction 5-[(5-phospho-1-deoxy-D-ribulos-1-ylimino)methylamino]-1-(5-phospho-beta-D-ribosyl)imidazole-4-carboxamide + L-glutamine = D-erythro-1-(imidazol-4-yl)glycerol 3-phosphate + 5-amino-1-(5-phospho-beta-D-ribosyl)imidazole-4-carboxamide + L-glutamate + H(+). It participates in amino-acid biosynthesis; L-histidine biosynthesis; L-histidine from 5-phospho-alpha-D-ribose 1-diphosphate: step 5/9. In terms of biological role, IGPS catalyzes the conversion of PRFAR and glutamine to IGP, AICAR and glutamate. The HisF subunit catalyzes the cyclization activity that produces IGP and AICAR from PRFAR using the ammonia provided by the HisH subunit. The protein is Imidazole glycerol phosphate synthase subunit HisF of Rhodococcus opacus (strain B4).